A 628-amino-acid polypeptide reads, in one-letter code: MCGIVGYVGHRPARDIVVDALRRMEYRGYDSAGIALIDGNGGLTVRRRAGRLANLEATLAETDSNDGDGLGGSTGLGHTRWATHGRPTDRNAHPHRDAAGKIAVVHNGIIENFAPLRAELEAAGVEFASDTDTEVAVHLVARQYTQGDTAGDFPASVLAVLQRLEGHFTLVFASADDPGTIVAARRSTPLVLGIGDGEMFVGSDVAAFIEHTRDAVELGQDQAVVLTADGYRITDFAGNDHLEAGRDFREFHIDWDLNAAEKGGYDYFMLKEIAEQPSAVADTLLGHFDKNRIVLDEQRLSDQELREIDKVFIVACGTAYHSGLLAKYAIEHWTRLPVEVELASEFRYRDPVLDRSTLVIAISQSGETADTLEAVRHAKTQKAKVLAICNTNGSQIPREADAVLYTRAGPEIGVAATKTFLAQIAANYLVGLALAQARGTKYPDEVAREYRELEAMPDLIKRVLAGMDSVAALAERFAPSSTVLFLGRHVGYPVALEGALKLKELAYMHAEGFAAGELKHGPIALIDENLPVIVVMPSPKNAAMLHAKLLSNIREIQARGAVTVVIAEEDDDTVRPYADHLIEIPSVSTLFQPLLSTIPLQVFAAGVARARGYDVDKPRNLAKSVTVE.

Catalysis depends on C2, which acts as the Nucleophile; for GATase activity. Residues 2-229 (CGIVGYVGHR…QDQAVVLTAD (228 aa)) enclose the Glutamine amidotransferase type-2 domain. A disordered region spans residues 61–94 (ETDSNDGDGLGGSTGLGHTRWATHGRPTDRNAHP). SIS domains are found at residues 301 to 440 (SDQE…ARGT) and 473 to 618 (LAER…VDKP). K623 serves as the catalytic For Fru-6P isomerization activity.

In terms of assembly, homodimer.

The protein resides in the cytoplasm. It catalyses the reaction D-fructose 6-phosphate + L-glutamine = D-glucosamine 6-phosphate + L-glutamate. Functionally, catalyzes the first step in hexosamine metabolism, converting fructose-6P into glucosamine-6P using glutamine as a nitrogen source. In Mycolicibacterium smegmatis (strain ATCC 700084 / mc(2)155) (Mycobacterium smegmatis), this protein is Glutamine--fructose-6-phosphate aminotransferase [isomerizing].